The following is a 498-amino-acid chain: UDP-N-acetylmuramate--L-alanine ligase (498 aa).

ATP is bound at residue 133 to 139; sequence GSSGKTT.

The protein belongs to the MurCDEF family.

It localises to the cytoplasm. It catalyses the reaction UDP-N-acetyl-alpha-D-muramate + L-alanine + ATP = UDP-N-acetyl-alpha-D-muramoyl-L-alanine + ADP + phosphate + H(+). Its pathway is cell wall biogenesis; peptidoglycan biosynthesis. Cell wall formation. The sequence is that of UDP-N-acetylmuramate--L-alanine ligase from Wolbachia pipientis wMel.